We begin with the raw amino-acid sequence, 237 residues long: Ribose-5-phosphate isomerase A (237 aa).

Substrate contacts are provided by residues 30–33 (SGST), 87–90 (DGAD), and 100–103 (KGGG). The active-site Proton acceptor is the E109. A substrate-binding site is contributed by K127.

This sequence belongs to the ribose 5-phosphate isomerase family. In terms of assembly, homodimer.

The catalysed reaction is aldehydo-D-ribose 5-phosphate = D-ribulose 5-phosphate. It participates in carbohydrate degradation; pentose phosphate pathway; D-ribose 5-phosphate from D-ribulose 5-phosphate (non-oxidative stage): step 1/1. In terms of biological role, catalyzes the reversible conversion of ribose-5-phosphate to ribulose 5-phosphate. The protein is Ribose-5-phosphate isomerase A of Synechococcus sp. (strain RCC307).